We begin with the raw amino-acid sequence, 817 residues long: Myosin-A (817 aa).

The residue at position 19 (Ser-19) is a Phosphoserine. Residues 97–771 enclose the Myosin motor domain; it reads MSFGDIGLLN…GAKMLSKIQR (675 aa). Position 191-198 (191-198) interacts with ATP; that stretch reads GESGAGKT. The segment at 661–671 is actin-binding; that stretch reads PHFIRCIKPNE. Residues 773 to 817 are tail; that stretch reads KLVEWENCVSVIEAAIMKYKHKQNVENNVSSLMRVQAHIRKRMVA.

This sequence belongs to the TRAFAC class myosin-kinesin ATPase superfamily. Myosin family. In terms of assembly, interacts with ACT1.

It is found in the cell membrane. Its function is as follows. Myosins are actin-based motor molecules with ATPase activity. Unconventional myosins serve in intracellular movements. Their highly divergent tails are presumed to bind to membranous compartments, which would be moved relative to actin filaments. The chain is Myosin-A from Plasmodium yoelii yoelii.